Reading from the N-terminus, the 100-residue chain is Flagellar transcriptional regulator FlhD (100 aa).

This sequence belongs to the FlhD family. In terms of assembly, homodimer; disulfide-linked. Forms a heterohexamer composed of two FlhC and four FlhD subunits. Each FlhC binds a FlhD dimer, forming a heterotrimer, and a hexamer assembles by dimerization of two heterotrimers.

It is found in the cytoplasm. Functionally, functions in complex with FlhC as a master transcriptional regulator that regulates transcription of several flagellar and non-flagellar operons by binding to their promoter region. Activates expression of class 2 flagellar genes, including fliA, which is a flagellum-specific sigma factor that turns on the class 3 genes. Also regulates genes whose products function in a variety of physiological pathways. The sequence is that of Flagellar transcriptional regulator FlhD from Ralstonia pickettii (strain 12D).